We begin with the raw amino-acid sequence, 493 residues long: Glutamate--tRNA ligase (493 aa).

A 'HIGH' region motif is present at residues 10–20 (PSPTGTPHVGL). Residues 254–258 (KLSKR) carry the 'KMSKS' region motif. Lysine 257 is an ATP binding site.

It belongs to the class-I aminoacyl-tRNA synthetase family. Glutamate--tRNA ligase type 1 subfamily. As to quaternary structure, monomer.

Its subcellular location is the cytoplasm. It catalyses the reaction tRNA(Glu) + L-glutamate + ATP = L-glutamyl-tRNA(Glu) + AMP + diphosphate. Its function is as follows. Catalyzes the attachment of glutamate to tRNA(Glu) in a two-step reaction: glutamate is first activated by ATP to form Glu-AMP and then transferred to the acceptor end of tRNA(Glu). This chain is Glutamate--tRNA ligase, found in Corynebacterium efficiens (strain DSM 44549 / YS-314 / AJ 12310 / JCM 11189 / NBRC 100395).